The sequence spans 219 residues: 7-cyano-7-deazaguanine synthase (219 aa).

10-20 (FSGGQDSTTCL) serves as a coordination point for ATP. Zn(2+) is bound by residues Cys188, Cys196, Cys199, and Cys202.

The protein belongs to the QueC family. It depends on Zn(2+) as a cofactor.

It catalyses the reaction 7-carboxy-7-deazaguanine + NH4(+) + ATP = 7-cyano-7-deazaguanine + ADP + phosphate + H2O + H(+). It functions in the pathway purine metabolism; 7-cyano-7-deazaguanine biosynthesis. Catalyzes the ATP-dependent conversion of 7-carboxy-7-deazaguanine (CDG) to 7-cyano-7-deazaguanine (preQ(0)). In Neisseria meningitidis serogroup B (strain ATCC BAA-335 / MC58), this protein is 7-cyano-7-deazaguanine synthase.